The chain runs to 233 residues: Orotidine 5'-phosphate decarboxylase (233 aa).

Substrate is bound by residues D9, K31, 58–67 (DLKLHDIPNT), T120, R182, Q191, G211, and R212. The active-site Proton donor is K60.

It belongs to the OMP decarboxylase family. Type 1 subfamily. In terms of assembly, homodimer.

It carries out the reaction orotidine 5'-phosphate + H(+) = UMP + CO2. It participates in pyrimidine metabolism; UMP biosynthesis via de novo pathway; UMP from orotate: step 2/2. Functionally, catalyzes the decarboxylation of orotidine 5'-monophosphate (OMP) to uridine 5'-monophosphate (UMP). In Listeria monocytogenes serotype 4a (strain HCC23), this protein is Orotidine 5'-phosphate decarboxylase.